The chain runs to 80 residues: UPF0248 protein YG5714_2801 (80 aa).

Belongs to the UPF0248 family.

The chain is UPF0248 protein YG5714_2801 from Saccharolobus islandicus (strain Y.G.57.14 / Yellowstone #1) (Sulfolobus islandicus).